The sequence spans 202 residues: Imidazole glycerol phosphate synthase subunit HisH (202 aa).

The 200-residue stretch at 3 to 202 (RIVIIDYGLG…KILKNFVEMC (200 aa)) folds into the Glutamine amidotransferase type-1 domain. Cys-79 functions as the Nucleophile in the catalytic mechanism. Active-site residues include His-183 and Glu-185.

In terms of assembly, heterodimer of HisH and HisF.

It localises to the cytoplasm. It carries out the reaction 5-[(5-phospho-1-deoxy-D-ribulos-1-ylimino)methylamino]-1-(5-phospho-beta-D-ribosyl)imidazole-4-carboxamide + L-glutamine = D-erythro-1-(imidazol-4-yl)glycerol 3-phosphate + 5-amino-1-(5-phospho-beta-D-ribosyl)imidazole-4-carboxamide + L-glutamate + H(+). The enzyme catalyses L-glutamine + H2O = L-glutamate + NH4(+). It participates in amino-acid biosynthesis; L-histidine biosynthesis; L-histidine from 5-phospho-alpha-D-ribose 1-diphosphate: step 5/9. In terms of biological role, IGPS catalyzes the conversion of PRFAR and glutamine to IGP, AICAR and glutamate. The HisH subunit catalyzes the hydrolysis of glutamine to glutamate and ammonia as part of the synthesis of IGP and AICAR. The resulting ammonia molecule is channeled to the active site of HisF. This Methanosarcina acetivorans (strain ATCC 35395 / DSM 2834 / JCM 12185 / C2A) protein is Imidazole glycerol phosphate synthase subunit HisH.